Consider the following 369-residue polypeptide: Ubiquinone biosynthesis protein COQ4, mitochondrial (369 aa).

The transit peptide at 1–35 (MLTSQKVSRVLLHSSFLKTPVSTQSRSFVFTTIAT) directs the protein to the mitochondrion. Zn(2+) contacts are provided by His-212, Asp-213, His-216, and Glu-228. Over residues 329–360 (AAAAATVTQRQRQQQRATATAANATSASSANV) the composition is skewed to low complexity. The tract at residues 329–369 (AAAAATVTQRQRQQQRATATAANATSASSANVKPSNTAGAM) is disordered.

The protein belongs to the COQ4 family. In terms of assembly, component of a multi-subunit COQ enzyme complex, composed of at least COQ3, COQ4, COQ5, COQ6, COQ7 and COQ9. It depends on Zn(2+) as a cofactor.

It is found in the mitochondrion inner membrane. The catalysed reaction is a 4-hydroxy-3-methoxy-5-(all-trans-polyprenyl)benzoate + H(+) = a 2-methoxy-6-(all-trans-polyprenyl)phenol + CO2. The protein operates within cofactor biosynthesis; ubiquinone biosynthesis. Its function is as follows. Lyase that catalyzes the C1-decarboxylation of 4-hydroxy-3-methoxy-5-(all-trans-polyprenyl)benzoic acid into 2-methoxy-6-(all-trans-polyprenyl)phenol during ubiquinone biosynthesis. The sequence is that of Ubiquinone biosynthesis protein COQ4, mitochondrial from Lodderomyces elongisporus (strain ATCC 11503 / CBS 2605 / JCM 1781 / NBRC 1676 / NRRL YB-4239) (Yeast).